The primary structure comprises 24 residues: Ascaphin-5 (24 aa).

Expressed by the skin glands.

The protein resides in the secreted. Functionally, antimicrobial peptide. Synthetic peptide shows higher potency against Gram-negative bacteria than against Gram-positive bacteria. Has a very week hemolytic activity. The sequence is that of Ascaphin-5 from Ascaphus truei (Coastal tailed frog).